A 170-amino-acid polypeptide reads, in one-letter code: Large ribosomal subunit protein uL5 (170 aa).

Belongs to the universal ribosomal protein uL5 family. In terms of assembly, part of the 50S ribosomal subunit; contacts the 5S rRNA and probably tRNA. Forms a bridge to the 30S subunit in the 70S ribosome.

Its function is as follows. This is one of the proteins that bind and probably mediate the attachment of the 5S RNA into the large ribosomal subunit, where it forms part of the central protuberance. In the 70S ribosome it contacts protein S13 of the 30S subunit (bridge B1b), connecting the 2 subunits; this bridge is implicated in subunit movement. May contact the P site tRNA; the 5S rRNA and some of its associated proteins might help stabilize positioning of ribosome-bound tRNAs. The sequence is that of Large ribosomal subunit protein uL5 from Thermoplasma acidophilum (strain ATCC 25905 / DSM 1728 / JCM 9062 / NBRC 15155 / AMRC-C165).